The primary structure comprises 326 residues: uncharacterized protein (326 aa).

Positions 293 to 326 (HRNYDANHSTSGEEENSGSRSRIAELSQSTIHRR) are disordered.

This is an uncharacterized protein from Oryza latifolia (Indian wild rice).